A 78-amino-acid polypeptide reads, in one-letter code: Acyl carrier protein (78 aa).

In terms of domain architecture, Carrier spans 2 to 77; sequence SDTADRVKKI…DAIKYIDENK (76 aa). Serine 37 is subject to O-(pantetheine 4'-phosphoryl)serine.

The protein belongs to the acyl carrier protein (ACP) family. Post-translationally, 4'-phosphopantetheine is transferred from CoA to a specific serine of apo-ACP by AcpS. This modification is essential for activity because fatty acids are bound in thioester linkage to the sulfhydryl of the prosthetic group.

It is found in the cytoplasm. It functions in the pathway lipid metabolism; fatty acid biosynthesis. Carrier of the growing fatty acid chain in fatty acid biosynthesis. The polypeptide is Acyl carrier protein (Novosphingobium aromaticivorans (strain ATCC 700278 / DSM 12444 / CCUG 56034 / CIP 105152 / NBRC 16084 / F199)).